The chain runs to 610 residues: Elongation factor 4 (610 aa).

In terms of domain architecture, tr-type G spans Ser7–Lys189. GTP is bound by residues Asp19–Thr24 and Asn136–Asp139.

The protein belongs to the TRAFAC class translation factor GTPase superfamily. Classic translation factor GTPase family. LepA subfamily.

It is found in the cell inner membrane. It carries out the reaction GTP + H2O = GDP + phosphate + H(+). Its function is as follows. Required for accurate and efficient protein synthesis under certain stress conditions. May act as a fidelity factor of the translation reaction, by catalyzing a one-codon backward translocation of tRNAs on improperly translocated ribosomes. Back-translocation proceeds from a post-translocation (POST) complex to a pre-translocation (PRE) complex, thus giving elongation factor G a second chance to translocate the tRNAs correctly. Binds to ribosomes in a GTP-dependent manner. The protein is Elongation factor 4 of Thermus thermophilus (strain ATCC 27634 / DSM 579 / HB8).